Reading from the N-terminus, the 427-residue chain is Mitogen-activated protein kinase 8B (427 aa).

The 296-residue stretch at 26–321 (YQNLRPIGSG…VDEALQHPYI (296 aa)) folds into the Protein kinase domain. ATP contacts are provided by residues 33-40 (GSGAQGIV) and lysine 55. The Proton acceptor role is filled by aspartate 151. The residue at position 183 (threonine 183) is a Phosphothreonine. The TXY signature appears at 183-185 (TPY). A Phosphotyrosine modification is found at tyrosine 185. The tract at residues 372–427 (IRGQPSPIGAAVINGSPQPSSSSSINDVSSMSTEPTVASDTDSSLEASAGPLSCCR) is disordered. Residues 387–403 (SPQPSSSSSINDVSSMS) show a composition bias toward low complexity. Residues 404 to 417 (TEPTVASDTDSSLE) show a composition bias toward polar residues.

This sequence belongs to the protein kinase superfamily. CMGC Ser/Thr protein kinase family. MAP kinase subfamily. The cofactor is Mg(2+). Dually phosphorylated on Thr-183 and Tyr-185, which activates the enzyme. Expressed at high levels in the ovary and at lower levels in brain, gill, heart, spleen, liver, kidney, muscle, bladder and gut.

It carries out the reaction L-seryl-[protein] + ATP = O-phospho-L-seryl-[protein] + ADP + H(+). It catalyses the reaction L-threonyl-[protein] + ATP = O-phospho-L-threonyl-[protein] + ADP + H(+). Its activity is regulated as follows. Activated by threonine and tyrosine phosphorylation. In terms of biological role, responds to activation by environmental stress and pro-inflammatory cytokines by phosphorylating a number of transcription factors, primarily components of AP-1 such as c-Jun and ATF2 and thus regulates AP-1 transcriptional activity. May play a role in the regulation of the circadian clock. This Cyprinus carpio (Common carp) protein is Mitogen-activated protein kinase 8B (mapk8b).